The sequence spans 139 residues: Desampylase (139 aa).

Positions 6–139 (LSLAADARDS…EFRELSVAVE (134 aa)) constitute an MPN domain. Residue Glu-31 is the Proton donor/acceptor of the active site. Zn(2+)-binding residues include His-88, His-90, and Asp-101. Residues 88–101 (HSHPESDPVPSATD) carry the JAMM motif motif.

It belongs to the peptidase M67B family. Monomer. It depends on Zn(2+) as a cofactor.

It catalyses the reaction an N(6)-[small archaeal modifier protein]-[protein]-L-lysine + H2O = a [protein]-L-lysine + a [small archaeal modifier protein].. With respect to regulation, inhibited by EDTA and N-ethylmaleimide (NEM) in vitro. Metalloprotease that displays desampylase (DSAMP) activity, cleaving ubiquitin-like small archaeal modifier proteins (SAMP1, SAMP2 and SAMP3) from protein conjugates (isopeptide- and linear-linked). Thus, likely regulates sampylation and the pools of 'free' SAMP available for protein modification. Functions as a specific and not a general protease since it is unable to hydrolyze a variety of unmodified proteins otherwise hydrolyzed by proteinase K. This is Desampylase from Haloferax volcanii (strain ATCC 29605 / DSM 3757 / JCM 8879 / NBRC 14742 / NCIMB 2012 / VKM B-1768 / DS2) (Halobacterium volcanii).